The chain runs to 211 residues: N-(5'-phosphoribosyl)anthranilate isomerase (211 aa).

This sequence belongs to the TrpF family.

It catalyses the reaction N-(5-phospho-beta-D-ribosyl)anthranilate = 1-(2-carboxyphenylamino)-1-deoxy-D-ribulose 5-phosphate. It participates in amino-acid biosynthesis; L-tryptophan biosynthesis; L-tryptophan from chorismate: step 3/5. The protein is N-(5'-phosphoribosyl)anthranilate isomerase of Pseudomonas aeruginosa (strain LESB58).